Here is a 449-residue protein sequence, read N- to C-terminus: Glutamate--tRNA ligase 2 (449 aa).

The 'HIGH' region signature appears at 17–27 (PSPTGFLHVGN). The 'KMSKS' region motif lies at 248–252 (ALSKR). ATP is bound at residue lysine 251.

This sequence belongs to the class-I aminoacyl-tRNA synthetase family. Glutamate--tRNA ligase type 1 subfamily. As to quaternary structure, monomer.

It localises to the cytoplasm. The enzyme catalyses tRNA(Glu) + L-glutamate + ATP = L-glutamyl-tRNA(Glu) + AMP + diphosphate. Functionally, catalyzes the attachment of glutamate to tRNA(Glu) in a two-step reaction: glutamate is first activated by ATP to form Glu-AMP and then transferred to the acceptor end of tRNA(Glu). This Jannaschia sp. (strain CCS1) protein is Glutamate--tRNA ligase 2.